The primary structure comprises 385 residues: Protein pelota homolog (385 aa).

Lysine 162 participates in a covalent cross-link: Glycyl lysine isopeptide (Lys-Gly) (interchain with G-Cter in SUMO2). 4 positions are modified to phosphoserine: serine 374, serine 380, serine 381, and serine 382.

This sequence belongs to the eukaryotic release factor 1 family. Pelota subfamily. Component of the Pelota-HBS1L complex, also named Dom34-Hbs1 complex, composed of PELO and HBS1L. Interacts with PINK1. Interacts with ABCE1. Interacts with CNOT4. The cofactor is a divalent metal cation. As to expression, ubiquitously expressed.

It localises to the cytoplasm. Its function is as follows. Component of the Pelota-HBS1L complex, a complex that recognizes stalled ribosomes and triggers the No-Go Decay (NGD) pathway. In the Pelota-HBS1L complex, PELO recognizes ribosomes stalled at the 3' end of an mRNA and engages stalled ribosomes by destabilizing mRNA in the mRNA channel. Following mRNA extraction from stalled ribosomes by the SKI complex, the Pelota-HBS1L complex promotes recruitment of ABCE1, which drives the disassembly of stalled ribosomes, followed by degradation of damaged mRNAs as part of the NGD pathway. As part of the PINK1-regulated signaling, upon mitochondrial damage is recruited to the ribosome/mRNA-ribonucleoprotein complex associated to mitochondrial outer membrane thereby enabling the recruitment of autophagy receptors and induction of mitophagy. The polypeptide is Protein pelota homolog (Mus musculus (Mouse)).